Consider the following 178-residue polypeptide: Adenine phosphoribosyltransferase (178 aa).

Belongs to the purine/pyrimidine phosphoribosyltransferase family. As to quaternary structure, homodimer.

It is found in the cytoplasm. It carries out the reaction AMP + diphosphate = 5-phospho-alpha-D-ribose 1-diphosphate + adenine. It functions in the pathway purine metabolism; AMP biosynthesis via salvage pathway; AMP from adenine: step 1/1. Catalyzes a salvage reaction resulting in the formation of AMP, that is energically less costly than de novo synthesis. This Novosphingobium aromaticivorans (strain ATCC 700278 / DSM 12444 / CCUG 56034 / CIP 105152 / NBRC 16084 / F199) protein is Adenine phosphoribosyltransferase.